Reading from the N-terminus, the 720-residue chain is Heat shock protein homolog pss1 (720 aa).

At S38 the chain carries Phosphoserine. T39 bears the Phosphothreonine mark. Residues 658–690 are compositionally biased toward basic and acidic residues; the sequence is KRQKVQAEREAAKAATKSEAEKQKPSGKFEEGT. Residues 658-720 are disordered; sequence KRQKVQAERE…ETMEIDEQKE (63 aa). Acidic residues predominate over residues 703–720; the sequence is VAPENEEVETMEIDEQKE.

The protein belongs to the heat shock protein 70 family.

The protein localises to the cytoplasm. Functionally, required for normal growth at various temperatures. This Schizosaccharomyces pombe (strain 972 / ATCC 24843) (Fission yeast) protein is Heat shock protein homolog pss1 (pss1).